We begin with the raw amino-acid sequence, 118 residues long: DNA-binding protein M164_1799 (118 aa).

It belongs to the PDCD5 family.

This Saccharolobus islandicus (strain M.16.4 / Kamchatka #3) (Sulfolobus islandicus) protein is DNA-binding protein M164_1799.